Here is a 119-residue protein sequence, read N- to C-terminus: Ribonuclease P protein component (119 aa).

The protein belongs to the RnpA family. As to quaternary structure, consists of a catalytic RNA component (M1 or rnpB) and a protein subunit.

The catalysed reaction is Endonucleolytic cleavage of RNA, removing 5'-extranucleotides from tRNA precursor.. RNaseP catalyzes the removal of the 5'-leader sequence from pre-tRNA to produce the mature 5'-terminus. It can also cleave other RNA substrates such as 4.5S RNA. The protein component plays an auxiliary but essential role in vivo by binding to the 5'-leader sequence and broadening the substrate specificity of the ribozyme. This Histophilus somni (strain 129Pt) (Haemophilus somnus) protein is Ribonuclease P protein component.